Reading from the N-terminus, the 132-residue chain is Glycine cleavage system H protein (132 aa).

Positions 24-106 (RVRVGITDYA…YGAGWLFELE (83 aa)) constitute a Lipoyl-binding domain. N6-lipoyllysine is present on lysine 65.

This sequence belongs to the GcvH family. In terms of assembly, the glycine cleavage system is composed of four proteins: P, T, L and H. (R)-lipoate serves as cofactor.

Its function is as follows. The glycine cleavage system catalyzes the degradation of glycine. The H protein shuttles the methylamine group of glycine from the P protein to the T protein. In Nocardia farcinica (strain IFM 10152), this protein is Glycine cleavage system H protein.